Here is a 780-residue protein sequence, read N- to C-terminus: LPS-assembly protein LptD (780 aa).

An N-terminal signal peptide occupies residues 1-24 (MKKRFPTLLATLIWTALYSQHTLA).

The protein belongs to the LptD family. Component of the lipopolysaccharide transport and assembly complex. Interacts with LptE and LptA.

The protein localises to the cell outer membrane. Functionally, together with LptE, is involved in the assembly of lipopolysaccharide (LPS) at the surface of the outer membrane. The protein is LPS-assembly protein LptD of Yersinia pseudotuberculosis serotype I (strain IP32953).